The chain runs to 226 residues: RNA annealing protein YRA1 (226 aa).

A disordered region spans residues 1–62 (MSANLDKSLD…PIRKNTRAPP (62 aa)). Position 2 is an N-acetylserine (S2). S8 and S100 each carry phosphoserine. The 81-residue stretch at 78–158 (VKVNVEGLPR…SRLRLNLIVD (81 aa)) folds into the RRM domain. Residues 173–226 (AMPQKGGNAPRPVKRGPNRKAAMAKSQNKPKREKPAKKSLEDLDKEMADYFEKK) form a disordered region. The span at 208–226 (AKKSLEDLDKEMADYFEKK) shows a compositional bias: basic and acidic residues.

As to quaternary structure, component of the transcription/export (TREX) complex, which is at least is formed of SUB2, TEX1 and YRA1 and the THO complex composed of HPR1, MFT1, THO2 and THP1. Interacts with RDS3 and YRA2.

It localises to the nucleus. In terms of biological role, RNA-binding RNA annealing protein. May have a role in pre-mRNA metabolism. Component the TREX complex, which operates in coupling transcription elongation to mRNA export. In Saccharomyces cerevisiae (strain ATCC 204508 / S288c) (Baker's yeast), this protein is RNA annealing protein YRA1 (YRA1).